Here is a 101-residue protein sequence, read N- to C-terminus: DNA-binding protein Fis (101 aa).

A DNA-binding region (H-T-H motif) is located at residues 77–96 (QTRAANMLGINRGTLRKKLK).

This sequence belongs to the transcriptional regulatory Fis family. Homodimer.

Its function is as follows. Activates ribosomal RNA transcription. Plays a direct role in upstream activation of rRNA promoters. This is DNA-binding protein Fis from Shewanella loihica (strain ATCC BAA-1088 / PV-4).